We begin with the raw amino-acid sequence, 488 residues long: Ribulose bisphosphate carboxylase large chain (488 aa).

The substrate site is built by N127 and T177. Residue K179 is the Proton acceptor of the active site. Substrate is bound at residue K181. Residues K205, D207, and E208 each contribute to the Mg(2+) site. K205 bears the N6-carboxylysine mark. Catalysis depends on H297, which acts as the Proton acceptor. Residues R298, H330, and S382 each contribute to the substrate site.

Belongs to the RuBisCO large chain family. Type I subfamily. Heterohexadecamer of 8 large chains and 8 small chains. Mg(2+) is required as a cofactor.

The protein localises to the plastid. It is found in the chloroplast. The catalysed reaction is 2 (2R)-3-phosphoglycerate + 2 H(+) = D-ribulose 1,5-bisphosphate + CO2 + H2O. It carries out the reaction D-ribulose 1,5-bisphosphate + O2 = 2-phosphoglycolate + (2R)-3-phosphoglycerate + 2 H(+). Functionally, ruBisCO catalyzes two reactions: the carboxylation of D-ribulose 1,5-bisphosphate, the primary event in carbon dioxide fixation, as well as the oxidative fragmentation of the pentose substrate in the photorespiration process. Both reactions occur simultaneously and in competition at the same active site. The sequence is that of Ribulose bisphosphate carboxylase large chain from Pylaiella littoralis (Seaweed).